Reading from the N-terminus, the 557-residue chain is CCR4-NOT transcription complex subunit 6 (557 aa).

4 LRR repeats span residues 52 to 73, 75 to 96, 98 to 120, and 121 to 143; these read HLTA…IAKL, NLVY…LGNM, SLRE…GKLF, and QLQT…CLEP. The tract at residues 153-557 is nuclease domain; the sequence is LLDNLSGTAK…VNGIHLPGRR (405 aa). Glu240 serves as a coordination point for Mg(2+). Substrate contacts are provided by Glu240, Glu276, His361, and Pro366. Asp412 provides a ligand contact to Mg(2+). Catalysis depends on Asp412, which acts as the Proton donor/acceptor. Substrate-binding residues include Asn414, Asn481, and Phe486.

It belongs to the CCR4/nocturin family. In terms of assembly, component of the CCR4-NOT complex; distinct complexes seem to exist that differ in the participation of probably mutually exclusive catalytic subunits; the complex contains two deadenylase subunits, CNOT6 or CNOT6L, and CNOT7 or CNOT8. Interacts with CNOT7 and CNOT8. Interacts with UNR. Interacts with ZFP36L1 (via N-terminus). Interacts with ZNF335. The cofactor is Mg(2+).

The protein localises to the cytoplasm. Its subcellular location is the nucleus. It catalyses the reaction Exonucleolytic cleavage of poly(A) to 5'-AMP.. Its function is as follows. Poly(A) nuclease with 3'-5' RNase activity. Catalytic component of the CCR4-NOT complex which is one of the major cellular mRNA deadenylases and is linked to various cellular processes including bulk mRNA degradation, miRNA-mediated repression, translational repression during translational initiation and general transcription regulation. Additional complex functions may be a consequence of its influence on mRNA expression. Involved in mRNA decay mediated by the major-protein-coding determinant of instability (mCRD) of the FOS gene in the cytoplasm. In the presence of ZNF335, enhances ligand-dependent transcriptional activity of nuclear hormone receptors. Mediates cell proliferation and cell survival and prevents cellular senescence. This Mus musculus (Mouse) protein is CCR4-NOT transcription complex subunit 6 (Cnot6).